Consider the following 199-residue polypeptide: Holliday junction branch migration complex subunit RuvA (199 aa).

Residues 1–63 (MIASVRGEVL…EDSMTLYGFS (63 aa)) form a domain I region. Positions 64 to 141 (DTESKDLFSL…DAVATTAGAA (78 aa)) are domain II. Positions 141-145 (ASGAV) are flexible linker. Residues 146–199 (VGSSIRDQIVEALEGLGFPIKQAEQATDSVLAESPEATTSVALRSALSLLGKTR) are domain III.

The protein belongs to the RuvA family. As to quaternary structure, homotetramer. Forms an RuvA(8)-RuvB(12)-Holliday junction (HJ) complex. HJ DNA is sandwiched between 2 RuvA tetramers; dsDNA enters through RuvA and exits via RuvB. An RuvB hexamer assembles on each DNA strand where it exits the tetramer. Each RuvB hexamer is contacted by two RuvA subunits (via domain III) on 2 adjacent RuvB subunits; this complex drives branch migration. In the full resolvosome a probable DNA-RuvA(4)-RuvB(12)-RuvC(2) complex forms which resolves the HJ.

It localises to the cytoplasm. In terms of biological role, the RuvA-RuvB-RuvC complex processes Holliday junction (HJ) DNA during genetic recombination and DNA repair, while the RuvA-RuvB complex plays an important role in the rescue of blocked DNA replication forks via replication fork reversal (RFR). RuvA specifically binds to HJ cruciform DNA, conferring on it an open structure. The RuvB hexamer acts as an ATP-dependent pump, pulling dsDNA into and through the RuvAB complex. HJ branch migration allows RuvC to scan DNA until it finds its consensus sequence, where it cleaves and resolves the cruciform DNA. The polypeptide is Holliday junction branch migration complex subunit RuvA (Rhodococcus erythropolis (strain PR4 / NBRC 100887)).